Reading from the N-terminus, the 146-residue chain is U-scoloptoxin(16)-Er1a (146 aa).

The N-terminal stretch at 1–26 (MNTVSVVQFLAVGCAVFVLYGRGVFA) is a signal peptide.

It belongs to the scoloptoxin-16 family. Post-translationally, contains 4 disulfide bonds. Expressed by the venom gland.

The protein resides in the secreted. The chain is U-scoloptoxin(16)-Er1a from Ethmostigmus rubripes (Giant centipede).